A 477-amino-acid chain; its full sequence is Bifunctional protein HldE (477 aa).

The ribokinase stretch occupies residues 1 to 318; sequence MKVNLPAFER…ENAVRGRADT (318 aa). Residue 195-198 participates in ATP binding; the sequence is NLSE. Residue D264 is part of the active site. Positions 344 to 477 are cytidylyltransferase; the sequence is MTNGVFDILH…IKKIQTESEK (134 aa).

In the N-terminal section; belongs to the carbohydrate kinase PfkB family. It in the C-terminal section; belongs to the cytidylyltransferase family. Homodimer.

It catalyses the reaction D-glycero-beta-D-manno-heptose 7-phosphate + ATP = D-glycero-beta-D-manno-heptose 1,7-bisphosphate + ADP + H(+). It carries out the reaction D-glycero-beta-D-manno-heptose 1-phosphate + ATP + H(+) = ADP-D-glycero-beta-D-manno-heptose + diphosphate. Its pathway is nucleotide-sugar biosynthesis; ADP-L-glycero-beta-D-manno-heptose biosynthesis; ADP-L-glycero-beta-D-manno-heptose from D-glycero-beta-D-manno-heptose 7-phosphate: step 1/4. It participates in nucleotide-sugar biosynthesis; ADP-L-glycero-beta-D-manno-heptose biosynthesis; ADP-L-glycero-beta-D-manno-heptose from D-glycero-beta-D-manno-heptose 7-phosphate: step 3/4. Its function is as follows. Catalyzes the phosphorylation of D-glycero-D-manno-heptose 7-phosphate at the C-1 position to selectively form D-glycero-beta-D-manno-heptose-1,7-bisphosphate. In terms of biological role, catalyzes the ADP transfer from ATP to D-glycero-beta-D-manno-heptose 1-phosphate, yielding ADP-D-glycero-beta-D-manno-heptose. The sequence is that of Bifunctional protein HldE from Salmonella paratyphi A (strain ATCC 9150 / SARB42).